The following is a 99-amino-acid chain: Ragulator complex protein LAMTOR4 (99 aa).

Position 1 is an N-acetylmethionine (Met1). Residue Thr2 is modified to N-acetylthreonine; in Ragulator complex protein LAMTOR4, N-terminally processed. Ser67 carries the phosphoserine; by PKA modification.

The protein belongs to the LAMTOR4 family. In terms of assembly, part of the Ragulator complex composed of LAMTOR1, LAMTOR2, LAMTOR3, LAMTOR4 and LAMTOR5. LAMTOR4 and LAMTOR5 form a heterodimer that interacts, through LAMTOR1, with a LAMTOR2, LAMTOR3 heterodimer. The Ragulator complex interacts with both the mTORC1 complex and heterodimers constituted of the Rag GTPases RagA/RRAGA, RagB/RRAGB, RagC/RRAGC and RagD/RRAGD; regulated by amino acid availability. The Ragulator complex interacts with SLC38A9; the probable amino acid sensor. Component of the lysosomal folliculin complex (LFC), composed of FLCN, FNIP1 (or FNIP2), RagA/RRAGA or RagB/RRAGB GDP-bound, RagC/RRAGC or RagD/RRAGD GTP-bound, and Ragulator. Phosphorylation at Ser-67 by PKA inhibits Ragulator complex assembly.

Its subcellular location is the lysosome. As part of the Ragulator complex it is involved in amino acid sensing and activation of mTORC1, a signaling complex promoting cell growth in response to growth factors, energy levels, and amino acids. Activated by amino acids through a mechanism involving the lysosomal V-ATPase, the Ragulator plays a dual role for the small GTPases Rag (RagA/RRAGA, RagB/RRAGB, RagC/RRAGC and/or RagD/RRAGD): it (1) acts as a guanine nucleotide exchange factor (GEF), activating the small GTPases Rag and (2) mediates recruitment of Rag GTPases to the lysosome membrane. Activated Ragulator and Rag GTPases function as a scaffold recruiting mTORC1 to lysosomes where it is in turn activated. The protein is Ragulator complex protein LAMTOR4 of Homo sapiens (Human).